Consider the following 215-residue polypeptide: Glutaredoxin 2 (215 aa).

The region spanning 1–77 is the GST N-terminal domain; the sequence is MKLYIYDHCP…YVDKLDGKPL (77 aa). A disulfide bond links Cys9 and Cys12.

This sequence belongs to the glutaredoxin family.

Functionally, involved in reducing some disulfides in a coupled system with glutathione reductase. Does not act as hydrogen donor for ribonucleotide reductase. The protein is Glutaredoxin 2 (grxB) of Escherichia coli O157:H7.